A 484-amino-acid chain; its full sequence is Aspartyl/glutamyl-tRNA(Asn/Gln) amidotransferase subunit B (484 aa).

Belongs to the GatB/GatE family. GatB subfamily. As to quaternary structure, heterotrimer of A, B and C subunits.

It catalyses the reaction L-glutamyl-tRNA(Gln) + L-glutamine + ATP + H2O = L-glutaminyl-tRNA(Gln) + L-glutamate + ADP + phosphate + H(+). The enzyme catalyses L-aspartyl-tRNA(Asn) + L-glutamine + ATP + H2O = L-asparaginyl-tRNA(Asn) + L-glutamate + ADP + phosphate + 2 H(+). Allows the formation of correctly charged Asn-tRNA(Asn) or Gln-tRNA(Gln) through the transamidation of misacylated Asp-tRNA(Asn) or Glu-tRNA(Gln) in organisms which lack either or both of asparaginyl-tRNA or glutaminyl-tRNA synthetases. The reaction takes place in the presence of glutamine and ATP through an activated phospho-Asp-tRNA(Asn) or phospho-Glu-tRNA(Gln). The polypeptide is Aspartyl/glutamyl-tRNA(Asn/Gln) amidotransferase subunit B (Cupriavidus metallidurans (strain ATCC 43123 / DSM 2839 / NBRC 102507 / CH34) (Ralstonia metallidurans)).